The chain runs to 234 residues: tRNA (guanine-N(1)-)-methyltransferase (234 aa).

Residues G112 and 132-137 contribute to the S-adenosyl-L-methionine site; that span reads IGDFIL.

The protein belongs to the RNA methyltransferase TrmD family. As to quaternary structure, homodimer.

It is found in the cytoplasm. The enzyme catalyses guanosine(37) in tRNA + S-adenosyl-L-methionine = N(1)-methylguanosine(37) in tRNA + S-adenosyl-L-homocysteine + H(+). Its function is as follows. Specifically methylates guanosine-37 in various tRNAs. This Campylobacter jejuni (strain RM1221) protein is tRNA (guanine-N(1)-)-methyltransferase.